A 1403-amino-acid polypeptide reads, in one-letter code: E3 ubiquitin-protein ligase SNT2 (1403 aa).

A disordered region spans residues 40–62 (SGAKTKGSNSQTPRNCKRTSNPA). Positions 45-62 (KGSNSQTPRNCKRTSNPA) are enriched in polar residues. The BAH domain maps to 121-258 (VLLSANDTIY…RYTLKYYKVY (138 aa)). The PHD-type 1 zinc-finger motif lies at 317–369 (DKRCQFCKEWCIQKESLSCDECGVCAHLYCMDPPLDRKPNKDVVWTCFSCLQK). Residues 555–606 (LKEPSFTAVEIRKFEEAVEKFGSELRPVCEYVGTQPMSMIVRFYYNWKKTER) form the SANT domain. Residues 1038–1097 (RTFCSVCKEKFNDNDNYEVVCGNCGLTVHYFCYAIKLPKDMKKNTNLKTFKWLCDPCSND) form a PHD-type 2 zinc finger. The RING-type; degenerate zinc-finger motif lies at 1041–1095 (CSVCKEKFNDNDNYEVVCGNCGLTVHYFCYAIKLPKDMKKNTNLKTFKWLCDPCS). The C2HC pre-PHD-type zinc-finger motif lies at 1105–1153 (TYQCSMCPTKDYDYDRYRSQSFKICPDALKCTSLGTWVHLVCSLFNEDI). Residues 1177–1231 (FTCGVCRINGGGLVKCNKCQYRYHITCAQNSSNFKLMFEKKNMSVDTTLPCIKDV) form a PHD-type 3; degenerate zinc finger.

As to quaternary structure, component of the Snt2C complex composed of SNT2, ECM5 and RPD3. Interacts with the E2 ubiquitin-conjugating enzyme UBC4 and histones H3 and H4. Binding is enhanced to methylated histone H3K36me3.

Its subcellular location is the cytoplasm. It localises to the nucleus. It catalyses the reaction S-ubiquitinyl-[E2 ubiquitin-conjugating enzyme]-L-cysteine + [acceptor protein]-L-lysine = [E2 ubiquitin-conjugating enzyme]-L-cysteine + N(6)-ubiquitinyl-[acceptor protein]-L-lysine.. In terms of biological role, transcriptional regulator that, together with ECM5, recruits histone deacetylase RPD3 to a small number of promoters of stress-response genes in response to oxidative stress. Probable ubiquitin-protein ligase involved in the degradation-related ubiquitination of histones. Contributes to the post-translational regulation of histone protein levels by polyubiquitination of excess histones for subsequent degradation. The protein is E3 ubiquitin-protein ligase SNT2 of Saccharomyces cerevisiae (strain ATCC 204508 / S288c) (Baker's yeast).